Here is a 100-residue protein sequence, read N- to C-terminus: Integration host factor subunit alpha (100 aa).

This sequence belongs to the bacterial histone-like protein family. In terms of assembly, heterodimer of an alpha and a beta chain.

Functionally, this protein is one of the two subunits of integration host factor, a specific DNA-binding protein that functions in genetic recombination as well as in transcriptional and translational control. Involved in hydrogenase gene expression. This chain is Integration host factor subunit alpha (ihfA), found in Rhodobacter capsulatus (Rhodopseudomonas capsulata).